The following is a 704-amino-acid chain: Phosphate acetyltransferase (704 aa).

A phosphate acetyltransferase region spans residues 379 to 704; it reads AFRYQVVQRA…AIQADAQAPA (326 aa).

In the N-terminal section; belongs to the CobB/CobQ family. This sequence in the C-terminal section; belongs to the phosphate acetyltransferase and butyryltransferase family. Homohexamer.

Its subcellular location is the cytoplasm. It carries out the reaction acetyl-CoA + phosphate = acetyl phosphate + CoA. The protein operates within metabolic intermediate biosynthesis; acetyl-CoA biosynthesis; acetyl-CoA from acetate: step 2/2. Its activity is regulated as follows. Activity is increased under anaerobic growth conditions. Functionally, involved in acetate metabolism. In combination with LdhA and AckA, allows fermentation of pyruvate, enhancing long-term survival under anaerobic conditions. This is Phosphate acetyltransferase (pta) from Pseudomonas aeruginosa (strain ATCC 15692 / DSM 22644 / CIP 104116 / JCM 14847 / LMG 12228 / 1C / PRS 101 / PAO1).